The primary structure comprises 95 residues: Large ribosomal subunit protein bL25 (95 aa).

The protein belongs to the bacterial ribosomal protein bL25 family. Part of the 50S ribosomal subunit; part of the 5S rRNA/L5/L18/L25 subcomplex. Contacts the 5S rRNA. Binds to the 5S rRNA independently of L5 and L18.

This is one of the proteins that binds to the 5S RNA in the ribosome where it forms part of the central protuberance. In Aeromonas salmonicida (strain A449), this protein is Large ribosomal subunit protein bL25.